Reading from the N-terminus, the 354-residue chain is Variable large protein 15/16 (354 aa).

The signal sequence occupies residues 1–18; that stretch reads MRKRISAIIMTLFMVLVS. Cys-19 carries N-palmitoyl cysteine lipidation. Residue Cys-19 is the site of S-diacylglycerol cysteine attachment. A disordered region spans residues 333-354; the sequence is EDKSVEATNTAEATTSGQQAKN. A compositionally biased stretch (polar residues) spans 338–354; sequence EATNTAEATTSGQQAKN.

It belongs to the variable large protein (Vlp) family. Delta subfamily.

It is found in the cell outer membrane. Its function is as follows. The Vlp and Vsp proteins are antigenically distinct proteins, only one vlp or vsp gene is transcriptionally active at any one time. Switching between these genes is a mechanism of host immune response evasion. In Borrelia hermsii, this protein is Variable large protein 15/16.